The sequence spans 95 residues: MRKYETIFILNPSFDEETVKANIEKFKGVIENGGGTVENVDFWGKRKLAYEISKVSEGFYTLVNFTANPELPRELDRIFRITDGVIRHIIVNEQV.

It belongs to the bacterial ribosomal protein bS6 family.

In terms of biological role, binds together with bS18 to 16S ribosomal RNA. The sequence is that of Small ribosomal subunit protein bS6 from Clostridium beijerinckii (strain ATCC 51743 / NCIMB 8052) (Clostridium acetobutylicum).